Reading from the N-terminus, the 159-residue chain is Ankyrin repeat domain-containing protein 37 (159 aa).

3 ANK repeats span residues 1–25 (MLLL…SVNA), 30–59 (QEQS…DLNQ), and 63–92 (LGET…QIGV). A Nuclear localization signal motif is present at residues 130–150 (EQQERDPRAPVLRQKRSFRTV).

In terms of processing, ubiquitinated by the CRL2(FEM1B) complex, leading to its degradation. In terms of tissue distribution, expressed testis, ovary, uterus, kidney, liver, but not in other tissues.

The protein resides in the nucleus. It localises to the cytoplasm. This chain is Ankyrin repeat domain-containing protein 37, found in Mus musculus (Mouse).